A 405-amino-acid chain; its full sequence is 11-beta-hydroxysteroid dehydrogenase type 2 (405 aa).

82–111 (TRAVLITGCDSGFGKETAKKLDSMGFTVLA) is a binding site for NAD(+). Substrate is bound at residue S219. Y232 serves as the catalytic Proton acceptor. Residues 335–339 (RRRYY) form an essential for protein stability region. Residues 377-387 (QPGQPGTTPPQ) show a composition bias toward low complexity. The disordered stretch occupies residues 377–405 (QPGQPGTTPPQDAAQDPNLSPGPSPAVAR). Residues 396–405 (SPGPSPAVAR) are compositionally biased toward pro residues.

This sequence belongs to the short-chain dehydrogenases/reductases (SDR) family. In terms of assembly, interacts with ligand-free cytoplasmic NR3C2. Expressed in kidney, placenta, pancreas, prostate, ovary, small intestine and colon, and in lower levels in the spleen and testis. At midgestation, expressed at high levels in placenta and in fetal kidney and, at much lower levels, in fetal lung and testis.

It localises to the microsome. It is found in the endoplasmic reticulum. The enzyme catalyses an 11beta-hydroxysteroid + NAD(+) = an 11-oxosteroid + NADH + H(+). It carries out the reaction cortisol + NAD(+) = cortisone + NADH + H(+). The catalysed reaction is corticosterone + NAD(+) = 11-dehydrocorticosterone + NADH + H(+). It catalyses the reaction 11beta,17beta-dihydroxyandrost-4-ene-3-one + NAD(+) = 17beta-hydroxyandrost-4-ene-3,11-dione + NADH + H(+). The enzyme catalyses 11beta-hydroxyandrost-4-ene-3,17-dione + NAD(+) = androst-4-ene-3,11,17-trione + NADH + H(+). The protein operates within steroid metabolism. Its activity is regulated as follows. Inhibited by glycyrrhetinic acid (derived from liquorice). In terms of biological role, catalyzes the conversion of biologically active 11beta-hydroxyglucocorticoids (11beta-hydroxysteroid) such as cortisol, to inactive 11-ketoglucocorticoids (11-oxosteroid) such as cortisone, in the presence of NAD(+). Functions as a dehydrogenase (oxidase), thereby decreasing the concentration of active glucocorticoids, thus protecting the nonselective mineralocorticoid receptor from occupation by glucocorticoids. Plays an important role in maintaining glucocorticoids balance during preimplantation and protects the fetus from excessive maternal corticosterone exposure. Catalyzes the oxidation of 11beta-hydroxytestosterone (11beta,17beta-dihydroxyandrost-4-ene-3-one) to 11-ketotestosterone (17beta-hydroxyandrost-4-ene-3,11-dione), a major bioactive androgen. Catalyzes the conversion of 11beta-hydroxyandrostenedione (11beta-hydroxyandrost-4-ene-3,17-dione) to 11-ketoandrostenedione (androst-4-ene-3,11,17-trione), which can be further metabolized to 11-ketotestosterone. Converts 7-beta-25-dihydroxycholesterol to 7-oxo-25-hydroxycholesterol in vitro. 7-beta-25-dihydroxycholesterol (not 7-oxo-25-hydroxycholesterol) acts as a ligand for the G-protein-coupled receptor (GPCR) Epstein-Barr virus-induced gene 2 (EBI2) and may thereby regulate immune cell migration. May protect ovulating oocytes and fertilizing spermatozoa from the adverse effects of cortisol. This is 11-beta-hydroxysteroid dehydrogenase type 2 from Homo sapiens (Human).